Here is a 253-residue protein sequence, read N- to C-terminus: 3-dehydroquinate dehydratase (253 aa).

3-dehydroquinate-binding positions include 46–48 and R82; that span reads EWR. H143 (proton donor/acceptor) is an active-site residue. Residue K170 is the Schiff-base intermediate with substrate of the active site. R213, S232, and Q236 together coordinate 3-dehydroquinate.

It belongs to the type-I 3-dehydroquinase family. As to quaternary structure, homodimer.

It carries out the reaction 3-dehydroquinate = 3-dehydroshikimate + H2O. Its pathway is metabolic intermediate biosynthesis; chorismate biosynthesis; chorismate from D-erythrose 4-phosphate and phosphoenolpyruvate: step 3/7. Its activity is regulated as follows. Inhibited by flavonoids such as datiscetin, naringenin, marein and phloretin. Its function is as follows. Involved in the third step of the chorismate pathway, which leads to the biosynthesis of aromatic amino acids (AroAA). Catalyzes the cis-dehydration of 3-dehydroquinate (DHQ) and introduces the first double bond of the aromatic ring to yield 3-dehydroshikimate. The reaction involves the formation of an imine intermediate between the keto group of 3-dehydroquinate and the epsilon-amino group of Lys-170 at the active site. In Enterococcus faecalis (strain ATCC 700802 / V583), this protein is 3-dehydroquinate dehydratase.